The chain runs to 161 residues: Nucleotide-binding protein Ssed_3443 (161 aa).

The protein belongs to the YajQ family.

Nucleotide-binding protein. The polypeptide is Nucleotide-binding protein Ssed_3443 (Shewanella sediminis (strain HAW-EB3)).